Reading from the N-terminus, the 300-residue chain is Type 1 fimbrin D-mannose specific adhesin (300 aa).

The first 21 residues, 1–21, serve as a signal peptide directing secretion; that stretch reads MKRVITLFAVLLMGWSVNAWS.

The protein belongs to the fimbrial protein family.

The protein localises to the fimbrium. In terms of biological role, involved in regulation of length and mediation of adhesion of type 1 fimbriae (but not necessary for the production of fimbriae). Adhesin responsible for the binding to D-mannose. It is laterally positioned at intervals in the structure of the type 1 fimbriae. In order to integrate FimH in the fimbriae FimF and FimG are needed. In Escherichia coli (strain K12), this protein is Type 1 fimbrin D-mannose specific adhesin (fimH).